Reading from the N-terminus, the 510-residue chain is Bifunctional purine biosynthesis protein PurH (510 aa).

The region spanning 1 to 142 (MRALLSVSDK…KNYKDVMVLC (142 aa)) is the MGS-like domain.

This sequence belongs to the PurH family.

The enzyme catalyses (6R)-10-formyltetrahydrofolate + 5-amino-1-(5-phospho-beta-D-ribosyl)imidazole-4-carboxamide = 5-formamido-1-(5-phospho-D-ribosyl)imidazole-4-carboxamide + (6S)-5,6,7,8-tetrahydrofolate. It catalyses the reaction IMP + H2O = 5-formamido-1-(5-phospho-D-ribosyl)imidazole-4-carboxamide. It functions in the pathway purine metabolism; IMP biosynthesis via de novo pathway; 5-formamido-1-(5-phospho-D-ribosyl)imidazole-4-carboxamide from 5-amino-1-(5-phospho-D-ribosyl)imidazole-4-carboxamide (10-formyl THF route): step 1/1. The protein operates within purine metabolism; IMP biosynthesis via de novo pathway; IMP from 5-formamido-1-(5-phospho-D-ribosyl)imidazole-4-carboxamide: step 1/1. This Campylobacter jejuni (strain RM1221) protein is Bifunctional purine biosynthesis protein PurH.